Here is a 299-residue protein sequence, read N- to C-terminus: Acetylglutamate kinase (299 aa).

Residues 72–73, R94, and N196 contribute to the substrate site; that span reads GG.

Belongs to the acetylglutamate kinase family. ArgB subfamily.

Its subcellular location is the cytoplasm. It carries out the reaction N-acetyl-L-glutamate + ATP = N-acetyl-L-glutamyl 5-phosphate + ADP. The protein operates within amino-acid biosynthesis; L-arginine biosynthesis; N(2)-acetyl-L-ornithine from L-glutamate: step 2/4. Functionally, catalyzes the ATP-dependent phosphorylation of N-acetyl-L-glutamate. This Paraburkholderia phymatum (strain DSM 17167 / CIP 108236 / LMG 21445 / STM815) (Burkholderia phymatum) protein is Acetylglutamate kinase.